Here is a 427-residue protein sequence, read N- to C-terminus: Enolase (427 aa).

Q163 lines the (2R)-2-phosphoglycerate pocket. The active-site Proton donor is the E205. D242, E285, and D312 together coordinate Mg(2+). K337, R366, S367, and K388 together coordinate (2R)-2-phosphoglycerate. K337 acts as the Proton acceptor in catalysis.

Belongs to the enolase family. Mg(2+) serves as cofactor.

It localises to the cytoplasm. It is found in the secreted. The protein localises to the cell surface. It catalyses the reaction (2R)-2-phosphoglycerate = phosphoenolpyruvate + H2O. It functions in the pathway carbohydrate degradation; glycolysis; pyruvate from D-glyceraldehyde 3-phosphate: step 4/5. Functionally, catalyzes the reversible conversion of 2-phosphoglycerate (2-PG) into phosphoenolpyruvate (PEP). It is essential for the degradation of carbohydrates via glycolysis. The protein is Enolase of Bradyrhizobium diazoefficiens (strain JCM 10833 / BCRC 13528 / IAM 13628 / NBRC 14792 / USDA 110).